Consider the following 151-residue polypeptide: 3-hydroxyacyl-[acyl-carrier-protein] dehydratase FabZ (151 aa).

Residue H56 is part of the active site.

This sequence belongs to the thioester dehydratase family. FabZ subfamily.

The protein localises to the cytoplasm. It carries out the reaction a (3R)-hydroxyacyl-[ACP] = a (2E)-enoyl-[ACP] + H2O. Involved in unsaturated fatty acids biosynthesis. Catalyzes the dehydration of short chain beta-hydroxyacyl-ACPs and long chain saturated and unsaturated beta-hydroxyacyl-ACPs. The sequence is that of 3-hydroxyacyl-[acyl-carrier-protein] dehydratase FabZ from Rhodopseudomonas palustris (strain HaA2).